The primary structure comprises 58 residues: Small ribosomal subunit protein bS21 (58 aa).

The protein belongs to the bacterial ribosomal protein bS21 family.

In Lactobacillus johnsonii (strain CNCM I-12250 / La1 / NCC 533), this protein is Small ribosomal subunit protein bS21.